The following is a 434-amino-acid chain: Glutamate-1-semialdehyde 2,1-aminomutase 2 (434 aa).

At Lys270 the chain carries N6-(pyridoxal phosphate)lysine.

It belongs to the class-III pyridoxal-phosphate-dependent aminotransferase family. HemL subfamily. Homodimer. The cofactor is pyridoxal 5'-phosphate.

The protein localises to the cytoplasm. The catalysed reaction is (S)-4-amino-5-oxopentanoate = 5-aminolevulinate. The protein operates within porphyrin-containing compound metabolism; protoporphyrin-IX biosynthesis; 5-aminolevulinate from L-glutamyl-tRNA(Glu): step 2/2. This chain is Glutamate-1-semialdehyde 2,1-aminomutase 2, found in Bacillus cereus (strain G9842).